Here is a 439-residue protein sequence, read N- to C-terminus: MASSCCLHAILLCSLLFITSTTAQSETSFRPKGLILPITKDALTLQYLTQIQQRTPLVPVSLTLDLGGQFLWVDCDQGYVSSTYRPARCRSAQCSLAGAGSGCGQCFSPPKPGCNNNTCGLLPDNTITRTATSGELASDTVQVQSSNGKNPGRHVSDKDFLFVCGSTFLLEGLASGVKGMAGLGRTRISLPSQFSAEFSFPRKFAVCLSSSTNSKGVVLFGDGPYTFLPNREFANNDFSYTPLFINPVSTASAFSSREPSSEYFIGVKSIKINEKVVPINTTLLSIDNQGVGGTKISTVNPYTILETSIYNAVTNFFVKELVNITRVASVAPFRACFDSRNIASTRVGPAVPSIDLVLQNENVFWRIFGANSMVQVSENVLCLGFVDGGVSPRTSIVVGGYTIEDNLLQFDLARSRLGFTSSILFRQTTCANFNFTSIA.

The first 23 residues, 1–23 (MASSCCLHAILLCSLLFITSTTA), serve as a signal peptide directing secretion. The Peptidase A1 domain maps to 47-420 (YLTQIQQRTP…DLARSRLGFT (374 aa)). Asparagine 116, asparagine 280, asparagine 323, and asparagine 434 each carry an N-linked (GlcNAc...) asparagine glycan.

It belongs to the peptidase A1 family. As to quaternary structure, interacts with the Phytophtora parasitica xyloglucanase XEG1 and xyloglucanase-like XLP1. Possesses stronger binding affinity with XLP1, a truncated paralog of P.parasitica XEG1 which has no enzyme activity.

Its subcellular location is the secreted. It is found in the extracellular space. The protein resides in the apoplast. Functionally, involved in plant defense against Phytophtora parasitica. Contributes positively to Nicotiana resistance against P.parasitica. Binds the P.parasitica xyloglucanase XEG1 and inhibits its cell wall degrading enzyme activity and its contribution as P.parasitica virulence factor. XEG1 acts as an important virulence factor during P.parasitica infection but also acts as a pathogen-associated molecular pattern (PAMP) in Nictotiana species, where it can trigger defense responses including cell death. Its function is as follows. (Microbial infection) Possesses stronger binding affinity with XLP1, a truncated paralog of P.parasitica XEG1 which has no enzyme activity. Is impaired in its inhibitor activity towards the P.parasitica xyloglucanase XEG1 when hijacked by XLP1 binding. This Nicotiana benthamiana protein is Probable aspartic proteinase GIP2.